The primary structure comprises 121 residues: Large ribosomal subunit protein uL24 (121 aa).

The disordered stretch occupies residues 1–30; the sequence is MVRIVSKQPRKQRKARYNAPNHTRGRFLSA.

It belongs to the universal ribosomal protein uL24 family. In terms of assembly, part of the 50S ribosomal subunit.

Functionally, one of two assembly initiator proteins, it binds directly to the 5'-end of the 23S rRNA, where it nucleates assembly of the 50S subunit. Located at the polypeptide exit tunnel on the outside of the subunit. This is Large ribosomal subunit protein uL24 from Methanoculleus marisnigri (strain ATCC 35101 / DSM 1498 / JR1).